Reading from the N-terminus, the 401-residue chain is LL-diaminopimelate aminotransferase (401 aa).

Residues Tyr15 and Gly42 each contribute to the substrate site. Residues Tyr72, 108 to 109 (AK), Tyr132, Asn176, Tyr207, and 235 to 237 (SFS) contribute to the pyridoxal 5'-phosphate site. Substrate-binding residues include Lys109, Tyr132, and Asn176. N6-(pyridoxal phosphate)lysine is present on Lys238. Pyridoxal 5'-phosphate-binding residues include Arg246 and Asn281. Asn281 and Arg377 together coordinate substrate.

Belongs to the class-I pyridoxal-phosphate-dependent aminotransferase family. LL-diaminopimelate aminotransferase subfamily. In terms of assembly, homodimer. Pyridoxal 5'-phosphate is required as a cofactor.

It catalyses the reaction (2S,6S)-2,6-diaminopimelate + 2-oxoglutarate = (S)-2,3,4,5-tetrahydrodipicolinate + L-glutamate + H2O + H(+). The protein operates within amino-acid biosynthesis; L-lysine biosynthesis via DAP pathway; LL-2,6-diaminopimelate from (S)-tetrahydrodipicolinate (aminotransferase route): step 1/1. Involved in the synthesis of meso-diaminopimelate (m-DAP or DL-DAP), required for both lysine and peptidoglycan biosynthesis. Catalyzes the direct conversion of tetrahydrodipicolinate to LL-diaminopimelate. This chain is LL-diaminopimelate aminotransferase, found in Azobacteroides pseudotrichonymphae genomovar. CFP2.